The following is a 103-amino-acid chain: Colicin-V (103 aa).

Positions 1 to 15 (MRTLTLNELDSVSGG) are excised as a propeptide. Cysteine 91 and cysteine 102 are disulfide-bonded.

The protein localises to the secreted. Its function is as follows. Colicin V kills sensitive cells by disrupting the membrane potential. Colicins are polypeptide toxins produced by, and active against E.coli and closely related bacteria. The sequence is that of Colicin-V (cvaC) from Escherichia coli.